We begin with the raw amino-acid sequence, 122 residues long: MAATIDEELKKAFTELQAKVIDTQQKARLADLQIDQLTKVQKHARLTQTEMASLPDNTRLYEGVGRMFILRSKEEINNHLTDAQKTADEKVKELEQKKVYLERSVKEAEDNIREMLMARRAQ.

The protein belongs to the prefoldin subunit beta family. As to quaternary structure, heterohexamer of two PFD-alpha type and four PFD-beta type subunits.

Binds specifically to cytosolic chaperonin (c-CPN) and transfers target proteins to it. Binds to nascent polypeptide chain and promotes folding in an environment in which there are many competing pathways for nonnative proteins. This Tetraodon nigroviridis (Spotted green pufferfish) protein is Prefoldin subunit 1 (pfdn1).